The chain runs to 245 residues: MSQVNMRDMLKAGVHFGHQTRYWNPKMGKYIFGARNKIHIINLEKTLPMFNEALTFVERLAQGKNKILFVGTKRSAGKIVAEEAARCGSPYVDHRWLGGMLTNFKTIRASIKRLRDLEVQAEDGTFAKLTKKEALMRTRDLEKLDRSLGGIKDMGGLPDALFVIDVDHERIAITEANKLGIPVIGVVDTNSSPEGVDYIIPGNDDAIRAIQLYMGSMADAVIRGRNNVAGGTVEFAAEETQAAAE.

This sequence belongs to the universal ribosomal protein uS2 family.

This is Small ribosomal subunit protein uS2 from Pseudomonas fluorescens (strain Pf0-1).